Here is a 409-residue protein sequence, read N- to C-terminus: L-cysteine:1D-myo-inositol 2-amino-2-deoxy-alpha-D-glucopyranoside ligase (409 aa).

Residue cysteine 43 coordinates Zn(2+). Residues 43-46 (CGIT), threonine 58, and 81-83 (NVT) contribute to the L-cysteinyl-5'-AMP site. A 'HIGH' region motif is present at residues 45–55 (ITPYDATHMGH). The short motif at 183 to 188 (ERGGDP) is the 'ERGGDP' region element. Tryptophan 224 is a binding site for L-cysteinyl-5'-AMP. Residue cysteine 228 participates in Zn(2+) binding. Residue 246–248 (GSD) coordinates L-cysteinyl-5'-AMP. Histidine 253 is a binding site for Zn(2+). Valine 280 contributes to the L-cysteinyl-5'-AMP binding site. The short motif at 286-290 (KMSKS) is the 'KMSKS' region element.

The protein belongs to the class-I aminoacyl-tRNA synthetase family. MshC subfamily. Monomer. Requires Zn(2+) as cofactor.

The enzyme catalyses 1D-myo-inositol 2-amino-2-deoxy-alpha-D-glucopyranoside + L-cysteine + ATP = 1D-myo-inositol 2-(L-cysteinylamino)-2-deoxy-alpha-D-glucopyranoside + AMP + diphosphate + H(+). Functionally, catalyzes the ATP-dependent condensation of GlcN-Ins and L-cysteine to form L-Cys-GlcN-Ins. The polypeptide is L-cysteine:1D-myo-inositol 2-amino-2-deoxy-alpha-D-glucopyranoside ligase (Streptomyces griseus subsp. griseus (strain JCM 4626 / CBS 651.72 / NBRC 13350 / KCC S-0626 / ISP 5235)).